The sequence spans 278 residues: MALKTFKPVTPSLRQLVLVDRRELYKGKPVKALTEGKSSSGGRNNLGRITVRFRGGGHKRVLRNVDFKRRENLNVPATVERIEYDPNRTAFIALITFPDGKQSYILAPQRLSPGDKVIAGESVDVKPGNAAPIGSMPVGTIVHNVELKIGKGGAIARSAGNYAQIVGRDQGYVTLRLNSGEQRLVHGQCFATVGAVSNPDHMNISLGKAGRNRWLGKRPHVRGVAMNPVDHPHGGGEGRTSGGRNPVTPWGVPTKGKKTRSNKRTDTFILSSRHNRKK.

The interval 224-278 is disordered; the sequence is VAMNPVDHPHGGGEGRTSGGRNPVTPWGVPTKGKKTRSNKRTDTFILSSRHNRKK.

Belongs to the universal ribosomal protein uL2 family. In terms of assembly, part of the 50S ribosomal subunit. Forms a bridge to the 30S subunit in the 70S ribosome.

Its function is as follows. One of the primary rRNA binding proteins. Required for association of the 30S and 50S subunits to form the 70S ribosome, for tRNA binding and peptide bond formation. It has been suggested to have peptidyltransferase activity; this is somewhat controversial. Makes several contacts with the 16S rRNA in the 70S ribosome. The polypeptide is Large ribosomal subunit protein uL2 (Methylorubrum extorquens (strain CM4 / NCIMB 13688) (Methylobacterium extorquens)).